Here is a 560-residue protein sequence, read N- to C-terminus: Digoxin reductase (560 aa).

The tat-type signal signal peptide spans 1–48; sequence MEYGKCRGIERGMGRRDFLKAATLLGATAAGAGMLAGCAPKSASEAQA.

The protein belongs to the FAD-dependent oxidoreductase 2 family. In terms of assembly, may form a membrane-associated complex with Cgr1. The cofactor is FAD. [4Fe-4S] cluster is required as a cofactor. In terms of processing, predicted to be exported by the Tat system. The position of the signal peptide cleavage has not been experimentally proven.

The protein resides in the cell membrane. It catalyses the reaction digoxin + 2 Fe(II)-[cytochrome c] + 3 H(+) = dihydrodigoxin + 2 Fe(III)-[cytochrome c]. The enzyme catalyses digitoxin + 2 Fe(II)-[cytochrome c] + 3 H(+) = dihydrodigitoxin + 2 Fe(III)-[cytochrome c]. The catalysed reaction is digoxigenin + 2 Fe(II)-[cytochrome c] + 3 H(+) = dihydrodigoxigenin + 2 Fe(III)-[cytochrome c]. It carries out the reaction ouabain + 2 Fe(II)-[cytochrome c] + 3 H(+) = dihydroouabain + 2 Fe(III)-[cytochrome c]. It catalyses the reaction ouabagenin + 2 Fe(II)-[cytochrome c] + 3 H(+) = dihydroouabagenin + 2 Fe(III)-[cytochrome c]. Its function is as follows. Involved in the inactivation of the cardiac medication and plant natural product digoxin, thus decreasing drug efficacy and toxicity. Catalyzes the reduction of the alpha,beta-unsaturated butyrolactone ring of digoxin to the inactive metabolite dihydrodigoxin. Likely uses the cytochrome Cgr1 as the physiological electron donor, encoded by the adjacent gene in the locus. Only reduces digoxin and other cardenolide toxins, such as digitoxin, digoxigenin, ouabain and ouabagenin. Therefore is a specialized enzyme present in some gut bacteria E.lenta that protects their human host against ingested plant toxins. This chain is Digoxin reductase, found in Eggerthella lenta (strain ATCC 25559 / DSM 2243 / CCUG 17323 / JCM 9979 / KCTC 3265 / NCTC 11813 / VPI 0255 / 1899 B) (Eubacterium lentum).